The chain runs to 491 residues: MSDILRRGRLASVPDEEIINFTSSMNADKWIFKADILVDLAHTIMLKERKIIKAEDCKKILEGLLTIKEEGIEKLDHTYEDIHISLESRLIDMVGEDTGGRMHSGRSRNDEVATCIRLTLRNDLLLLMEELIALRNTLNDTSSENLNTLMPGFTHLQHAQPTTLAHHLTAHANAIGRDLERTMDCYKRVNLSPLGAAAFASTGFDLDRERTCKLLGFDGLIENSMDAVSSRDFLIESASVFANLMINLSKVAEEIVIWSTSEFAFIELDDRYASTSSIMPQKKNPDTAELLRGKSGVTIGSLMSLLAICKALPLSYNRDLQEATPNIMQSLETTRASVRIMNGMIATMSINKENMAGLATAGFTTATELADTMVRVCDIPFRTAHQIVGVLARGSGEPTLGEIDAVAHNVIGESLSSRGLTEKMVKEALDPILNVSKRSVIGGPSPESMERLIESSRERIANNTEILESLIANRDNAIESLFCEVEKCIDV.

Belongs to the lyase 1 family. Argininosuccinate lyase subfamily.

The protein localises to the cytoplasm. The catalysed reaction is 2-(N(omega)-L-arginino)succinate = fumarate + L-arginine. Its pathway is amino-acid biosynthesis; L-arginine biosynthesis; L-arginine from L-ornithine and carbamoyl phosphate: step 3/3. The sequence is that of Argininosuccinate lyase from Methanococcoides burtonii (strain DSM 6242 / NBRC 107633 / OCM 468 / ACE-M).